The following is a 931-amino-acid chain: Dual O-methyltransferase/FAD-dependent monooxygenase elcB (931 aa).

Residues 1-463 form an O-methyltransferase region; that stretch reads MAASTGLSTV…TTDKARPNGD (463 aa). Aspartate 254 contacts S-adenosyl-L-methionine. The Proton acceptor role is filled by histidine 304. The segment at 455 to 474 is disordered; that stretch reads TDKARPNGDTTHSGQASIPN. A compositionally biased stretch (polar residues) spans 462 to 474; sequence GDTTHSGQASIPN. An FAD-dependent monooxygenase region spans residues 464-931; sequence TTHSGQASIP…TFEELDVAEL (468 aa). FAD contacts are provided by glutamate 520, arginine 604, aspartate 836, and alanine 849.

The protein in the C-terminal section; belongs to the paxM FAD-dependent monooxygenase family. In the N-terminal section; belongs to the class I-like SAM-binding methyltransferase superfamily. Cation-independent O-methyltransferase family. COMT subfamily.

The enzyme catalyses nor-toralactone + S-adenosyl-L-methionine = toralactone + S-adenosyl-L-homocysteine + H(+). It catalyses the reaction toralactone + NADH + O2 + H(+) = 1-(3,4,5-trihydroxy-7-methoxynaphthalen-2-yl)propan-2-one + CO2 + NAD(+). The protein operates within secondary metabolite biosynthesis. Dual O-methyltransferase/FAD-dependent monooxygenase; part of the gene cluster that mediates the biosynthesis of elsinochrome C, a perelyenequinone phytotoxin structurally similar to cercosporin. The first step of elsinochrome C biosynthesis is performed by the polyketide synthase elcA which catalyzes the formation of nor-toralactone. The starter unit acyltransferase (SAT) domain of elcA initiates polyketide extension by the selective utilization of acetyl-CoA, which is elongated to the heptaketide in the beta-ketoacyl synthase (KS) domain by successive condensations with six malonyl units introduced by the malonyl acyltransferase (MAT) domain. The product template (PT) domain catalyzes C4-C9 and C2-C11 aldol cyclizations and dehydrations to a trihydroxynaphthalene, which is thought to be delivered to the thioesterase (TE) domain for product release. The bifunctional enzyme elcB then methylates nor-toralactone to toralactone before conducting an unusual oxidative aromatic ring opening. The next step in perylenequinone biosynthesis is an O-methylation at the nascent OH-6 of the elcB product performed by the O-methyltransferase elcD. The oxidative coupling of the two monomeric naphthol units in perylenequinone biosynthesis is catalyzed by the FAD-dependent monooxygenase elcE and the multicopper oxidase elcG. ElcG might catalyze the first intermolecular coupling in a regio- and stereo-selective manner via a phenol radical coupling mechanism and the elcE could forge the second C-C bond intramolecularly via a hydride transfer mechanism. The fasciclin domain-containing protein elcF might also play a role duting this step. The last piece of the puzzle in the biosynthesis of elsinochrome C is the additional annulation by enolate coupling to afford the dihydrobenzo(ghi)perylenequinone system, catalyzed by the FAD-dependent monooxygenase elcH. This chain is Dual O-methyltransferase/FAD-dependent monooxygenase elcB, found in Phaeosphaeria nodorum (strain SN15 / ATCC MYA-4574 / FGSC 10173) (Glume blotch fungus).